The following is an 877-amino-acid chain: Hopanoid transporter HpnN (877 aa).

The Cytoplasmic segment spans residues M1–R16. The chain crosses the membrane as a helical span at residues P17–R37. The Periplasmic portion of the chain corresponds to H38–L279. A helical transmembrane segment spans residues N280–A295. The Cytoplasmic portion of the chain corresponds to L296 to K299. Residues R300–M323 traverse the membrane as a helical segment. Positions I302–L428 constitute an SSD domain. Topologically, residues V324–V332 are periplasmic. The helical transmembrane segment at A333–V351 threads the bilayer. The Cytoplasmic segment spans residues K352–S373. Residues M374–P394 traverse the membrane as a helical segment. Over T395–G399 the chain is Periplasmic. The chain crosses the membrane as a helical span at residues V400–L426. The Cytoplasmic portion of the chain corresponds to R427–R452. The helical transmembrane segment at H453–L472 threads the bilayer. Topologically, residues A473–S718 are periplasmic. The chain crosses the membrane as a helical span at residues A719–L739. Residues R740–G743 lie on the Cytoplasmic side of the membrane. Residues D744 to L766 form a helical membrane-spanning segment. The Periplasmic portion of the chain corresponds to G767–N774. The chain crosses the membrane as a helical span at residues I775 to M794. At A795 to T809 the chain is on the cytoplasmic side. Residues H810–W827 form a helical membrane-spanning segment. The Periplasmic portion of the chain corresponds to L828–S836. The chain crosses the membrane as a helical span at residues M837 to V858. The Cytoplasmic portion of the chain corresponds to L859–E877.

This sequence belongs to the resistance-nodulation-cell division (RND) (TC 2.A.6) family. MmpL subfamily. Homodimer.

It localises to the cell inner membrane. Functionally, essential for hopanoid transport from the cytoplasmic to the outer membrane. Is capable of shuttling hopanoid lipids from the inner membrane to the periplasm, where they probably spontaneously insert to the inner leaflet of the outer membrane, strengthening the cell envelope. May be a proton-motive-force (PMF)-dependent transporter. Is critical for multidrug resistance and cell wall remodeling in Burkholderia. The protein is Hopanoid transporter HpnN of Burkholderia multivorans (strain ATCC 17616 / 249).